The primary structure comprises 312 residues: Protoheme IX farnesyltransferase (312 aa).

Helical transmembrane passes span 31 to 51, 58 to 78, 107 to 127, 130 to 150, 157 to 177, 184 to 204, 229 to 249, 250 to 270, and 286 to 306; these read LLMK…GLFI, PLLS…AGAI, TALT…AICV, ISSI…TMWL, NIVI…SAVT, CLML…TLSL, YSIL…YFTD, IAGL…LCYA, and FKYS…EHCI.

It belongs to the UbiA prenyltransferase family. Protoheme IX farnesyltransferase subfamily.

It is found in the cell inner membrane. The enzyme catalyses heme b + (2E,6E)-farnesyl diphosphate + H2O = Fe(II)-heme o + diphosphate. It participates in porphyrin-containing compound metabolism; heme O biosynthesis; heme O from protoheme: step 1/1. In terms of biological role, converts heme B (protoheme IX) to heme O by substitution of the vinyl group on carbon 2 of heme B porphyrin ring with a hydroxyethyl farnesyl side group. This chain is Protoheme IX farnesyltransferase, found in Orientia tsutsugamushi (strain Ikeda) (Rickettsia tsutsugamushi).